The primary structure comprises 142 residues: Transcriptional regulator MraZ (142 aa).

SpoVT-AbrB domains follow at residues 5–47 and 76–119; these read EYQH…TINE and ACIV…SREK.

The protein belongs to the MraZ family. In terms of assembly, forms oligomers.

It is found in the cytoplasm. It localises to the nucleoid. This Clostridium botulinum (strain Eklund 17B / Type B) protein is Transcriptional regulator MraZ.